The following is a 542-amino-acid chain: CTP synthase (542 aa).

Residues 1 to 265 (MARYVFITGG…DDEVLAAFGI (265 aa)) form an amidoligase domain region. Residue Ser-13 participates in CTP binding. Ser-13 contacts UTP. Residues 14 to 19 (SLGKGI) and Asp-71 contribute to the ATP site. Positions 71 and 139 each coordinate Mg(2+). Residues 146–148 (DIE), 186–191 (KTKPTQ), and Lys-222 each bind CTP. Residues 186–191 (KTKPTQ) and Lys-222 contribute to the UTP site. Residues 291–541 (TIAIVGKYTG…IEAATEQSRL (251 aa)) form the Glutamine amidotransferase type-1 domain. Position 353 (Gly-353) interacts with L-glutamine. Cys-380 (nucleophile; for glutamine hydrolysis) is an active-site residue. L-glutamine contacts are provided by residues 381–384 (FGMQ), Glu-404, and Arg-469. Catalysis depends on residues His-514 and Glu-516.

It belongs to the CTP synthase family. Homotetramer.

It catalyses the reaction UTP + L-glutamine + ATP + H2O = CTP + L-glutamate + ADP + phosphate + 2 H(+). The enzyme catalyses L-glutamine + H2O = L-glutamate + NH4(+). The catalysed reaction is UTP + NH4(+) + ATP = CTP + ADP + phosphate + 2 H(+). It functions in the pathway pyrimidine metabolism; CTP biosynthesis via de novo pathway; CTP from UDP: step 2/2. Its activity is regulated as follows. Allosterically activated by GTP, when glutamine is the substrate; GTP has no effect on the reaction when ammonia is the substrate. The allosteric effector GTP functions by stabilizing the protein conformation that binds the tetrahedral intermediate(s) formed during glutamine hydrolysis. Inhibited by the product CTP, via allosteric rather than competitive inhibition. Catalyzes the ATP-dependent amination of UTP to CTP with either L-glutamine or ammonia as the source of nitrogen. Regulates intracellular CTP levels through interactions with the four ribonucleotide triphosphates. This Rhizobium etli (strain CIAT 652) protein is CTP synthase.